Here is a 96-residue protein sequence, read N- to C-terminus: NADH-quinone oxidoreductase subunit K (96 aa).

3 helical membrane passes run methionine 1–arginine 21, isoleucine 25–phenylalanine 45, and valine 56–isoleucine 76.

It belongs to the complex I subunit 4L family. NDH-1 is composed of 14 different subunits. Subunits NuoA, H, J, K, L, M, N constitute the membrane sector of the complex.

Its subcellular location is the cell membrane. The catalysed reaction is a quinone + NADH + 5 H(+)(in) = a quinol + NAD(+) + 4 H(+)(out). In terms of biological role, NDH-1 shuttles electrons from NADH, via FMN and iron-sulfur (Fe-S) centers, to quinones in the respiratory chain. The immediate electron acceptor for the enzyme in this species is believed to be a menaquinone. Couples the redox reaction to proton translocation (for every two electrons transferred, four hydrogen ions are translocated across the cytoplasmic membrane), and thus conserves the redox energy in a proton gradient. The chain is NADH-quinone oxidoreductase subunit K from Thermobifida fusca (strain YX).